The sequence spans 338 residues: Dihydroorotate dehydrogenase (quinone) (338 aa).

Residues 59–63 (AGLDK) and Thr83 each bind FMN. Lys63 provides a ligand contact to substrate. Position 108–112 (108–112 (NRMGF)) interacts with substrate. Residues Asn136 and Asn169 each contribute to the FMN site. Position 169 (Asn169) interacts with substrate. Ser172 acts as the Nucleophile in catalysis. Asn174 contributes to the substrate binding site. Positions 214 and 242 each coordinate FMN. A substrate-binding site is contributed by 243–244 (NT). FMN contacts are provided by residues Gly265, Gly294, and 315–316 (YS).

This sequence belongs to the dihydroorotate dehydrogenase family. Type 2 subfamily. As to quaternary structure, monomer. Requires FMN as cofactor.

Its subcellular location is the cell membrane. It carries out the reaction (S)-dihydroorotate + a quinone = orotate + a quinol. The protein operates within pyrimidine metabolism; UMP biosynthesis via de novo pathway; orotate from (S)-dihydroorotate (quinone route): step 1/1. Catalyzes the conversion of dihydroorotate to orotate with quinone as electron acceptor. The sequence is that of Dihydroorotate dehydrogenase (quinone) from Azoarcus sp. (strain BH72).